A 292-amino-acid chain; its full sequence is Small ribosomal subunit biogenesis GTPase RsgA (292 aa).

A CP-type G domain is found at 64–221 (RSELFRPAVA…LVDTPGFSSL (158 aa)). GTP-binding positions include 113–116 (NKMD) and 164–172 (GPSGVGKST). Zn(2+) is bound by residues Cys245, Cys250, His252, and Cys258.

The protein belongs to the TRAFAC class YlqF/YawG GTPase family. RsgA subfamily. Monomer. Associates with 30S ribosomal subunit, binds 16S rRNA. It depends on Zn(2+) as a cofactor.

It localises to the cytoplasm. One of several proteins that assist in the late maturation steps of the functional core of the 30S ribosomal subunit. Helps release RbfA from mature subunits. May play a role in the assembly of ribosomal proteins into the subunit. Circularly permuted GTPase that catalyzes slow GTP hydrolysis, GTPase activity is stimulated by the 30S ribosomal subunit. The sequence is that of Small ribosomal subunit biogenesis GTPase RsgA from Clostridium botulinum (strain ATCC 19397 / Type A).